The chain runs to 1293 residues: Period circadian protein homolog 1 (1293 aa).

The segment at 1 to 134 (MSGPLEGADG…SSEQSARART (134 aa)) is disordered. The interval 1 to 151 (MSGPLEGADG…LRELKLRLPP (151 aa)) is interaction with BTRC. 2 stretches are compositionally biased toward low complexity: residues 48–57 (NSNGSSGNES) and 64–115 (GASQ…ASSE). Residues 116-132 (QDNPSTSGCSSEQSARA) are compositionally biased toward polar residues. Phosphothreonine; by CSNK1E is present on Thr121. Phosphoserine; by CSNK1E occurs at positions 122 and 126. The Nuclear export signal 1 motif lies at 138-147 (LMTALRELKL). PAS domains lie at 208–275 (ITSE…PSRL) and 348–414 (YEAP…KILQ). The PAC domain maps to 422–465 (HSPIRFCARNGEYVTMDTSWAGFVHPWSRKVAFVLGRHKVRTAP). A Nuclear export signal 2 motif is present at residues 489–498 (LSEQIHRLLL). Disordered regions lie at residues 509 to 544 (LCGVGPLMSPGPLHSPGSSSDSNGGDAEGPGPPAPV) and 647 to 697 (TKRK…KEPV). 2 stretches are compositionally biased toward low complexity: residues 513-533 (GPLMSPGPLHSPGSSSDSNGG) and 652-661 (ASSSCTASSA). Residues 596-814 (ELEVAPAPDQ…GLDTSSVAPS (219 aa)) are required for phosphorylation by CSNK1E. A phosphoserine mark is found at Ser660, Ser662, and Ser703. 4 disordered regions span residues 748–771 (GLAPGPAPSPAPSPTVAPDPAPDA), 808–870 (TSSV…PPAT), 935–1094 (SQAP…SKYF), and 1204–1293 (SVQD…NGTS). Residues 750-768 (APGPAPSPAPSPTVAPDPA) are compositionally biased toward pro residues. At Ser814 the chain carries Phosphoserine. Residues 823 to 839 (IPSGRRHHCRSKAKRSR) carry the Nuclear localization signal motif. Residues 826–843 (GRRHHCRSKAKRSRHHQT) are compositionally biased toward basic residues. Pro residues-rich tracts occupy residues 856 to 870 (SPVPSSGPWPPPPAT) and 952 to 962 (PSLPPPPPSPP). Positions 969–982 (LFNSRCSSPLQLNL) are enriched in polar residues. Residues Ser975 and Ser976 each carry the phosphoserine modification. A Nuclear export signal 3 motif is present at residues 978–985 (LQLNLLQL). Low complexity predominate over residues 1032–1058 (LSGSSDLLELLLQEDSRSGTGSAASGS). The LXXLL motif lies at 1039-1043 (LELLL). Positions 1059–1073 (LGSGLGSGSGSGSHE) are enriched in gly residues. The segment covering 1074–1091 (GGSTSASITRSSQSSHTS) has biased composition (low complexity). Residues 1145–1293 (SRDAASVLKQ…ALPAEENGTS (149 aa)) are CRY binding domain. The span at 1232–1250 (GEGGGVGGGGGGVGGGGGD) shows a compositional bias: gly residues. Residues 1255–1269 (AQTQIGTKGSSSQDS) show a composition bias toward polar residues.

Homodimer. Component of the circadian core oscillator, which includes the CRY proteins, CLOCK or NPAS2, BMAL1 or BMAL2, CSNK1D and/or CSNK1E, TIMELESS, and the PER proteins. Interacts directly with TIMELESS, PER2, PER3, CRY1 and CRY2. Interacts with BMAL1 and CLOCK. Interacts with GPRASP1. Interacts (phosphorylated) with BTRC and FBXW11; the interactions trigger proteasomal degradation. Interacts with NONO and WDR5. Interacts with SFPQ. Interacts with USP2. Interacts with HNF4A. Post-translationally, phosphorylated on serine residues by CSNK1D, CSNK1E and probably also by CSNK1G2. Phosphorylation by CSNK1D or CSNK1E promotes nuclear location of PER proteins as well as ubiquitination and subsequent degradation. May be dephosphorylated by PP1. Ubiquitinated; requires phosphorylation by CSNK1E and interaction with BTRC and FBXW11. Deubiquitinated by USP2. Expressed in pancreas. In the CNS, highly expressed in the SCN, internal granular layer of granular cells of the olfactory bulb, tuberculum olfactorium, piriform cortex, gyrus dentatus of the hippocampus, cerebellum, pars tuberalis/median eminence, and pituitary, and moderately in the tenia tecta, caudate putamen, accumbens nucleus, spinal cord, superior and inferior colliculus and pineal gland.

It is found in the nucleus. The protein localises to the cytoplasm. Its function is as follows. Transcriptional repressor which forms a core component of the circadian clock. The circadian clock, an internal time-keeping system, regulates various physiological processes through the generation of approximately 24 hour circadian rhythms in gene expression, which are translated into rhythms in metabolism and behavior. It is derived from the Latin roots 'circa' (about) and 'diem' (day) and acts as an important regulator of a wide array of physiological functions including metabolism, sleep, body temperature, blood pressure, endocrine, immune, cardiovascular, and renal function. Consists of two major components: the central clock, residing in the suprachiasmatic nucleus (SCN) of the brain, and the peripheral clocks that are present in nearly every tissue and organ system. Both the central and peripheral clocks can be reset by environmental cues, also known as Zeitgebers (German for 'timegivers'). The predominant Zeitgeber for the central clock is light, which is sensed by retina and signals directly to the SCN. The central clock entrains the peripheral clocks through neuronal and hormonal signals, body temperature and feeding-related cues, aligning all clocks with the external light/dark cycle. Circadian rhythms allow an organism to achieve temporal homeostasis with its environment at the molecular level by regulating gene expression to create a peak of protein expression once every 24 hours to control when a particular physiological process is most active with respect to the solar day. Transcription and translation of core clock components (CLOCK, NPAS2, BMAL1, BMAL2, PER1, PER2, PER3, CRY1 and CRY2) plays a critical role in rhythm generation, whereas delays imposed by post-translational modifications (PTMs) are important for determining the period (tau) of the rhythms (tau refers to the period of a rhythm and is the length, in time, of one complete cycle). A diurnal rhythm is synchronized with the day/night cycle, while the ultradian and infradian rhythms have a period shorter and longer than 24 hours, respectively. Disruptions in the circadian rhythms contribute to the pathology of cardiovascular diseases, cancer, metabolic syndromes and aging. A transcription/translation feedback loop (TTFL) forms the core of the molecular circadian clock mechanism. Transcription factors, CLOCK or NPAS2 and BMAL1 or BMAL2, form the positive limb of the feedback loop, act in the form of a heterodimer and activate the transcription of core clock genes and clock-controlled genes (involved in key metabolic processes), harboring E-box elements (5'-CACGTG-3') within their promoters. The core clock genes: PER1/2/3 and CRY1/2 which are transcriptional repressors form the negative limb of the feedback loop and interact with the CLOCK|NPAS2-BMAL1|BMAL2 heterodimer inhibiting its activity and thereby negatively regulating their own expression. This heterodimer also activates nuclear receptors NR1D1/2 and RORA/B/G, which form a second feedback loop and which activate and repress BMAL1 transcription, respectively. Regulates circadian target genes expression at post-transcriptional levels, but may not be required for the repression at transcriptional level. Controls PER2 protein decay. Represses CRY2 preventing its repression on CLOCK/BMAL1 target genes such as FXYD5 and SCNN1A in kidney and PPARA in liver. Besides its involvement in the maintenance of the circadian clock, has an important function in the regulation of several processes. Participates in the repression of glucocorticoid receptor NR3C1/GR-induced transcriptional activity by reducing the association of NR3C1/GR to glucocorticoid response elements (GREs) by BMAL1:CLOCK. Plays a role in the modulation of the neuroinflammatory state via the regulation of inflammatory mediators release, such as CCL2 and IL6. In spinal astrocytes, negatively regulates the MAPK14/p38 and MAPK8/JNK MAPK cascades as well as the subsequent activation of NFkappaB. Coordinately regulates the expression of multiple genes that are involved in the regulation of renal sodium reabsorption. Can act as gene expression activator in a gene and tissue specific manner, in kidney enhances WNK1 and SLC12A3 expression in collaboration with CLOCK. Modulates hair follicle cycling. Represses the CLOCK-BMAL1 induced transcription of BHLHE40/DEC1. This Rattus norvegicus (Rat) protein is Period circadian protein homolog 1.